Here is a 138-residue protein sequence, read N- to C-terminus: Bis(5'-nucleosyl)-tetraphosphatase [asymmetrical] (138 aa).

The 132-residue stretch at 1–132 (MVVKAAGLVI…EMGSLLRKFS (132 aa)) folds into the Nudix hydrolase domain. Residues 37–58 (GHVDPGEDEWQAAIRETKEEAN) carry the Nudix box motif.

The protein belongs to the Nudix hydrolase family. Monomer. Mg(2+) is required as a cofactor. It depends on Co(2+) as a cofactor. Requires Mn(2+) as cofactor. Zn(2+) serves as cofactor. The cofactor is Ca(2+).

The catalysed reaction is P(1),P(4)-bis(5'-adenosyl) tetraphosphate + H2O = AMP + ATP + 2 H(+). In terms of biological role, asymmetrically hydrolyzes Ap4A to yield AMP and ATP. In Caenorhabditis elegans, this protein is Bis(5'-nucleosyl)-tetraphosphatase [asymmetrical] (ndx-4).